Here is a 124-residue protein sequence, read N- to C-terminus: UPF0231 protein Shewana3_0655 (124 aa).

It belongs to the UPF0231 family.

This chain is UPF0231 protein Shewana3_0655, found in Shewanella sp. (strain ANA-3).